Reading from the N-terminus, the 314-residue chain is 2,3-dihydroxyphenylpropionate/2,3-dihydroxicinnamic acid 1,2-dioxygenase (314 aa).

H115 acts as the Proton donor in catalysis. H179 (proton acceptor) is an active-site residue.

It belongs to the LigB/MhpB extradiol dioxygenase family. As to quaternary structure, homotetramer. Fe(2+) is required as a cofactor.

The enzyme catalyses 3-(2,3-dihydroxyphenyl)propanoate + O2 = (2Z,4E)-2-hydroxy-6-oxonona-2,4-dienedioate + H(+). The catalysed reaction is (2E)-3-(2,3-dihydroxyphenyl)prop-2-enoate + O2 = (2Z,4E,7E)-2-hydroxy-6-oxonona-2,4,7-trienedioate + H(+). The protein operates within aromatic compound metabolism; 3-phenylpropanoate degradation. Its function is as follows. Catalyzes the non-heme iron(II)-dependent oxidative cleavage of 2,3-dihydroxyphenylpropionic acid and 2,3-dihydroxicinnamic acid into 2-hydroxy-6-ketononadienedioate and 2-hydroxy-6-ketononatrienedioate, respectively. This chain is 2,3-dihydroxyphenylpropionate/2,3-dihydroxicinnamic acid 1,2-dioxygenase, found in Rhodococcus jostii (strain RHA1).